Consider the following 281-residue polypeptide: Protein EMBRYO DEFECTIVE 1674 (281 aa).

2 stretches are compositionally biased toward polar residues: residues 1–14 (MTTT…QSLS) and 24–41 (PNTS…PNSS). The interval 1 to 47 (MTTTRAKSKFQSLSACRFTPLPEPNTSPSTYSKTLPKPNSSPGTDGT) is disordered. The region spanning 66–153 (VTLSDWWLTK…LGFPYDWEDY (88 aa)) is the SANTA domain.

Its function is as follows. Required for normal embryo development. The protein is Protein EMBRYO DEFECTIVE 1674 of Arabidopsis thaliana (Mouse-ear cress).